The primary structure comprises 144 residues: MPLVYFDASAFVKLLTTETGSSLASALWDGCDAALSSRLAYPEVRAALAAAARNHDLTESELADAERDWEDFWAATRPVELTATVEQHAGHLARAHALRGADAVHLASALAVGDPGLVVAVWDRRLHTGAHAAGCRVAPAQLDP.

The Mg(2+) site is built by Asp-7 and Asp-102.

It belongs to the PINc/VapC protein family. Mg(2+) serves as cofactor.

Functionally, toxic component of a type II toxin-antitoxin (TA) system. An RNase. Its cognate antitoxin is VapB45. This Mycobacterium tuberculosis (strain CDC 1551 / Oshkosh) protein is Ribonuclease VapC45.